The primary structure comprises 550 residues: Hydroxylamine reductase (550 aa).

[2Fe-2S] cluster-binding residues include Cys-3, Cys-6, Cys-18, and Cys-25. His-249, Glu-273, Cys-317, Cys-405, Cys-433, Cys-458, Glu-492, and Lys-494 together coordinate hybrid [4Fe-2O-2S] cluster. Cys-405 is subject to Cysteine persulfide.

It belongs to the HCP family. It depends on [2Fe-2S] cluster as a cofactor. Requires hybrid [4Fe-2O-2S] cluster as cofactor.

The protein resides in the cytoplasm. The enzyme catalyses A + NH4(+) + H2O = hydroxylamine + AH2 + H(+). Functionally, catalyzes the reduction of hydroxylamine to form NH(3) and H(2)O. This chain is Hydroxylamine reductase, found in Yersinia pseudotuberculosis serotype IB (strain PB1/+).